Consider the following 576-residue polypeptide: MIIAVRSPSGTTKINVSDTAIVKDLYVKLKENNVDIDGKSITKTPRDPPLEVGDKLSSLGIKSGDLLHLVGNNNNNNNDNKASSGSNNNNNNNNISKKEISYDEKLPNGLTPRCKHAVGDKCVFCSDAQGMKRCDHPENATCPNCQNKKFKGKRLKWLCNHPAGGKCSNCLRVGKNVSYKCNHGSTATCVNCMDKDDEDQDDNEEDNKDNKDNSEIKKSGFVPKVAIKNEVKTKCLHGPNQKCINCLPKDDPNSIEVPKRRCKNHGINGSCVECIEWRESLKMRLKSQDNPHAPGALVDFQSANIFQQYIANSKYEQQRIGFLFGNFLSDGSVVVDSIYEPPQECKDKQTPTLLPDPLADKIESMASMLGLTRVGWIFSHPSRKYTMSSTEIIQAASYQNKYGPSFVTLILSVNSDGQSNMEAFQVSDQALKLEKTGEFLPTQPDPTKCKLKSPVFEEGTETINADTHFFIVTVPLKAREDKSIFNISFPVENRIPVNTLSDLASYKLEHKDVSPLKFFSDFHFLIFLLENQFLDFQSDFPIICENIRSRSSENLIGYLEIINYQIGDIIGHDQFN.

2 disordered regions span residues 67–96 and 200–219; these read LHLV…NNIS and QDDN…IKKS. The span at 72–94 shows a compositional bias: low complexity; sequence NNNNNNNDNKASSGSNNNNNNNN. Residues 208–218 show a composition bias toward basic and acidic residues; the sequence is KDNKDNSEIKK. Residues 295–430 enclose the MPN domain; sequence GALVDFQSAN…MEAFQVSDQA (136 aa).

Belongs to the NPL4 family.

It functions in the pathway protein degradation; proteasomal ubiquitin-dependent pathway. May be part of a complex that binds ubiquitinated proteins and that is necessary for the export of misfolded proteins from the ER to the cytoplasm, where they are degraded by the proteasome. The polypeptide is Nuclear protein localization protein 4 homolog (nploc4) (Dictyostelium discoideum (Social amoeba)).